The sequence spans 235 residues: Leucyl/phenylalanyl-tRNA--protein transferase (235 aa).

This sequence belongs to the L/F-transferase family.

It localises to the cytoplasm. It catalyses the reaction N-terminal L-lysyl-[protein] + L-leucyl-tRNA(Leu) = N-terminal L-leucyl-L-lysyl-[protein] + tRNA(Leu) + H(+). The enzyme catalyses N-terminal L-arginyl-[protein] + L-leucyl-tRNA(Leu) = N-terminal L-leucyl-L-arginyl-[protein] + tRNA(Leu) + H(+). The catalysed reaction is L-phenylalanyl-tRNA(Phe) + an N-terminal L-alpha-aminoacyl-[protein] = an N-terminal L-phenylalanyl-L-alpha-aminoacyl-[protein] + tRNA(Phe). Its function is as follows. Functions in the N-end rule pathway of protein degradation where it conjugates Leu, Phe and, less efficiently, Met from aminoacyl-tRNAs to the N-termini of proteins containing an N-terminal arginine or lysine. This is Leucyl/phenylalanyl-tRNA--protein transferase from Anaeromyxobacter sp. (strain Fw109-5).